The chain runs to 443 residues: Enolase (443 aa).

Gln167 serves as a coordination point for (2R)-2-phosphoglycerate. Catalysis depends on Glu209, which acts as the Proton donor. Mg(2+) contacts are provided by Asp246, Glu291, and Asp318. Residues Lys343, Arg372, Ser373, and Lys394 each contribute to the (2R)-2-phosphoglycerate site. The Proton acceptor role is filled by Lys343.

This sequence belongs to the enolase family. Component of the RNA degradosome, a multiprotein complex involved in RNA processing and mRNA degradation. The cofactor is Mg(2+).

The protein resides in the cytoplasm. The protein localises to the secreted. Its subcellular location is the cell surface. It catalyses the reaction (2R)-2-phosphoglycerate = phosphoenolpyruvate + H2O. Its pathway is carbohydrate degradation; glycolysis; pyruvate from D-glyceraldehyde 3-phosphate: step 4/5. Catalyzes the reversible conversion of 2-phosphoglycerate (2-PG) into phosphoenolpyruvate (PEP). It is essential for the degradation of carbohydrates via glycolysis. In Wigglesworthia glossinidia brevipalpis, this protein is Enolase.